Here is a 384-residue protein sequence, read N- to C-terminus: Adaptive-response sensory kinase SasA (384 aa).

In terms of domain architecture, Histidine kinase spans 162-384 (MLAHDLRSPL…SFHFTLPVYR (223 aa)). The residue at position 165 (H165) is a Phosphohistidine; by autocatalysis.

In terms of assembly, homooligomerizes. Interacts with KaiC. Participates in the KaiABC clock complex, whose core is composed of a KaiC homohexamer, 6 KaiB and up to 6 KaiA dimers. SasA and KaiB(fs) compete to bind to KaiC.

It carries out the reaction ATP + protein L-histidine = ADP + protein N-phospho-L-histidine.. Functionally, member of the two-component regulatory system SasA/RpaA involved in genome-wide circadian gene expression. One of several clock output pathways. Participates in the Kai clock protein complex, the main circadian regulator in cyanobacteria, via its interaction with KaiC. KaiC enhances the autophosphorylation activity of SasA, which then transfers its phosphate group to RpaA to activate it. In addition to its output function, recruits fold-shifted KaiB (KaiB(fs)) to KaiC to cooperatively form the KaiB(6):KaiC(6) complex (independent of SasA kinase activity). Required for robustness of the circadian rhythm of gene expression and is involved in clock output, also required for adaptation to light/dark cycles. The chain is Adaptive-response sensory kinase SasA from Microcystis aeruginosa (strain NIES-843 / IAM M-2473).